Reading from the N-terminus, the 593-residue chain is MKVIEKILEAAGDGRTAFSFEYFPPKTEEGVENLFERMDRMVAHGPSFCDITWGAGGSTADLTLEIANRMQNMVCVETMMHLTCTNMPVEKIDHALETIKSNGIQNVLALRGDPPHGQDKFVQVEGGFACALDLVQHIRAKYGDYFGITVAGYPEAHPDAIQGEGGATLEAYSNDLAYLKRKVDAGADLIVTQLFYDTDIFLKFVNDCRQIGITCPIVPGIMPINNYKGFLRMTGFCKTKIPSEITAALDPIKDNEEAVRQYGIHLGTEMCKKILATGIKTLHLYTLNMDKSAIGILMNLGLIEESKVSRPLPWRPATNVFRVKEDVRPIFWANRPKSYLKRTLGWDQYPHGRWGDSRNPSYGALTDHQFTRPRGRGKKLQEEWAVPLKSVEDISERFTNFCQGKLTSSPWSELDGLQPETKIIDDQLVNINQKGFLTINSQPAVNGEKSDSPTVGWGGPGGYVYQKAYLEFFCAKEKLDQLIEKIKAFPSLTYIAVNKDGETFSNISPNAVNAVTWGVFPGKEIIQPTVVDHASFMVWKDEAFEIWTRGWGCMFPEGDSSRELLEKVQKTYYLVSLVDNDYVQGDLFAAFKI.

Glu-21 (proton donor/acceptor) is an active-site residue. NAD(+)-binding positions include 21-26 (EYFPPK) and 52-53 (TW). FAD contacts are provided by residues 52 to 53 (TW), His-81, 111 to 113 (RGD), Tyr-153, 157 to 160 (HPDA), Asp-175, and Lys-182. Asp-113 provides a ligand contact to substrate. The substrate site is built by Gln-193 and Tyr-285.

Belongs to the methylenetetrahydrofolate reductase family. Homodimer. The cofactor is FAD.

The catalysed reaction is (6S)-5-methyl-5,6,7,8-tetrahydrofolate + NAD(+) = (6R)-5,10-methylene-5,6,7,8-tetrahydrofolate + NADH + H(+). It functions in the pathway one-carbon metabolism; tetrahydrofolate interconversion. With respect to regulation, plant MTHFRs strongly prefer NADH over NADPH. Not inhibited by methionine or S-adenosylmethionine. Its function is as follows. The probable reversibility of the MTHFR reaction in plants suggests that they can metabolize the methyl group of 5,10-methylenetetrahydrofolate to serine, sugars and starch. The polypeptide is Methylenetetrahydrofolate reductase (NADH) 1 (Zea mays (Maize)).